A 201-amino-acid polypeptide reads, in one-letter code: Guanylate kinase (201 aa).

The Guanylate kinase-like domain occupies 10-195; the sequence is GKIIILSGPS…CVEEVKNILK (186 aa). 17 to 24 serves as a coordination point for ATP; sequence GPSGVGKG.

Belongs to the guanylate kinase family.

The protein resides in the cytoplasm. The catalysed reaction is GMP + ATP = GDP + ADP. Essential for recycling GMP and indirectly, cGMP. In Mycoplasma mobile (strain ATCC 43663 / 163K / NCTC 11711) (Mesomycoplasma mobile), this protein is Guanylate kinase.